The following is a 339-amino-acid chain: Inositol 2-dehydrogenase 2 (339 aa).

Belongs to the Gfo/Idh/MocA family. In terms of assembly, homotetramer.

It catalyses the reaction myo-inositol + NAD(+) = scyllo-inosose + NADH + H(+). In terms of biological role, involved in the oxidation of myo-inositol (MI) to 2-keto-myo-inositol (2KMI or 2-inosose). This Saccharopolyspora erythraea (strain ATCC 11635 / DSM 40517 / JCM 4748 / NBRC 13426 / NCIMB 8594 / NRRL 2338) protein is Inositol 2-dehydrogenase 2.